We begin with the raw amino-acid sequence, 466 residues long: tRNA modification GTPase MnmE (466 aa).

(6S)-5-formyl-5,6,7,8-tetrahydrofolate is bound by residues arginine 23, glutamate 86, and lysine 125. In terms of domain architecture, TrmE-type G spans 221 to 388 (GIPVAIVGEP…LKNELLSFVN (168 aa)). Position 231 (asparagine 231) interacts with K(+). Residues 231 to 236 (NVGKST), 250 to 256 (SDIAGTT), and 275 to 278 (DTAG) each bind GTP. Serine 235 contributes to the Mg(2+) binding site. K(+) contacts are provided by serine 250, isoleucine 252, and threonine 255. Position 256 (threonine 256) interacts with Mg(2+). (6S)-5-formyl-5,6,7,8-tetrahydrofolate is bound at residue lysine 466.

Belongs to the TRAFAC class TrmE-Era-EngA-EngB-Septin-like GTPase superfamily. TrmE GTPase family. Homodimer. Heterotetramer of two MnmE and two MnmG subunits. K(+) is required as a cofactor.

The protein resides in the cytoplasm. Exhibits a very high intrinsic GTPase hydrolysis rate. Involved in the addition of a carboxymethylaminomethyl (cmnm) group at the wobble position (U34) of certain tRNAs, forming tRNA-cmnm(5)s(2)U34. The polypeptide is tRNA modification GTPase MnmE (Flavobacterium johnsoniae (strain ATCC 17061 / DSM 2064 / JCM 8514 / BCRC 14874 / CCUG 350202 / NBRC 14942 / NCIMB 11054 / UW101) (Cytophaga johnsonae)).